The following is a 422-amino-acid chain: Histidinol dehydrogenase (422 aa).

NAD(+) is bound by residues Tyr-123, Gln-183, and Asn-206. Residues Ser-229, Gln-251, and His-254 each contribute to the substrate site. Zn(2+) is bound by residues Gln-251 and His-254. Catalysis depends on proton acceptor residues Glu-320 and His-321. The substrate site is built by His-321, Asp-354, Glu-408, and His-413. Position 354 (Asp-354) interacts with Zn(2+). Zn(2+) is bound at residue His-413.

Belongs to the histidinol dehydrogenase family. Zn(2+) serves as cofactor.

The enzyme catalyses L-histidinol + 2 NAD(+) + H2O = L-histidine + 2 NADH + 3 H(+). It participates in amino-acid biosynthesis; L-histidine biosynthesis; L-histidine from 5-phospho-alpha-D-ribose 1-diphosphate: step 9/9. Catalyzes the sequential NAD-dependent oxidations of L-histidinol to L-histidinaldehyde and then to L-histidine. The polypeptide is Histidinol dehydrogenase (Natronomonas pharaonis (strain ATCC 35678 / DSM 2160 / CIP 103997 / JCM 8858 / NBRC 14720 / NCIMB 2260 / Gabara) (Halobacterium pharaonis)).